We begin with the raw amino-acid sequence, 106 residues long: MNNILVEIGIENYIYLCVVLFCIGIFGVLYRRNAIIMFMSIEIMLNAVNLLFVAFSTFHQDAQGQVFVFFSMAVAAAEVAVGLAILVSIYRNLSSIDIDNLKNLKG.

The next 3 membrane-spanning stretches (helical) occupy residues 8–28, 35–55, and 66–86; these read IGIE…IFGV, IIMF…FVAF, and VFVF…LAIL.

It belongs to the complex I subunit 4L family. As to quaternary structure, NDH-1 is composed of 14 different subunits. Subunits NuoA, H, J, K, L, M, N constitute the membrane sector of the complex.

It localises to the cell inner membrane. It carries out the reaction a quinone + NADH + 5 H(+)(in) = a quinol + NAD(+) + 4 H(+)(out). Its function is as follows. NDH-1 shuttles electrons from NADH, via FMN and iron-sulfur (Fe-S) centers, to quinones in the respiratory chain. The immediate electron acceptor for the enzyme in this species is believed to be a menaquinone. Couples the redox reaction to proton translocation (for every two electrons transferred, four hydrogen ions are translocated across the cytoplasmic membrane), and thus conserves the redox energy in a proton gradient. This chain is NADH-quinone oxidoreductase subunit K, found in Flavobacterium psychrophilum (strain ATCC 49511 / DSM 21280 / CIP 103535 / JIP02/86).